Here is a 493-residue protein sequence, read N- to C-terminus: Xaa-Pro dipeptidase (493 aa).

Residue alanine 2 is modified to N-acetylalanine. Serine 167 bears the Phosphoserine mark. Histidine 255 lines the a dipeptide pocket. 3 residues coordinate Mn(2+): aspartate 276, aspartate 287, and histidine 370. Residue aspartate 287 coordinates a dipeptide. Histidine 377 and arginine 398 together coordinate a dipeptide. 2 residues coordinate Mn(2+): glutamate 412 and glutamate 452.

Belongs to the peptidase M24B family. Eukaryotic-type prolidase subfamily. In terms of assembly, homodimer. It depends on Mn(2+) as a cofactor.

It catalyses the reaction Xaa-L-Pro dipeptide + H2O = an L-alpha-amino acid + L-proline. Functionally, dipeptidase that catalyzes the hydrolysis of dipeptides with a prolyl (Xaa-Pro) or hydroxyprolyl residue in the C-terminal position. The preferred dipeptide substrate is Gly-Pro, but other Xaa-Pro dipeptides, such as Ala-Pro, Met-Pro, Phe-Pro, Val-Pro and Leu-Pro, can be cleaved. Plays an important role in collagen metabolism because the high level of iminoacids in collagen. The protein is Xaa-Pro dipeptidase (Pepd) of Mus musculus (Mouse).